A 150-amino-acid polypeptide reads, in one-letter code: UPF0506 protein SJCHGC02380 (150 aa).

Positions 1-18 (MNTCIQLLILCLVTVINS) are cleaved as a signal peptide. N-linked (GlcNAc...) asparagine glycosylation is found at Asn-20, Asn-24, Asn-36, Asn-48, Asn-52, and Asn-110. Disulfide bonds link Cys-116-Cys-130, Cys-123-Cys-134, and Cys-129-Cys-139.

This sequence belongs to the UPF0506 family.

It localises to the secreted. The chain is UPF0506 protein SJCHGC02380 from Schistosoma japonicum (Blood fluke).